The sequence spans 118 residues: Ribonuclease P protein component (118 aa).

The protein belongs to the RnpA family. Consists of a catalytic RNA component (M1 or rnpB) and a protein subunit.

It catalyses the reaction Endonucleolytic cleavage of RNA, removing 5'-extranucleotides from tRNA precursor.. Its function is as follows. RNaseP catalyzes the removal of the 5'-leader sequence from pre-tRNA to produce the mature 5'-terminus. It can also cleave other RNA substrates such as 4.5S RNA. The protein component plays an auxiliary but essential role in vivo by binding to the 5'-leader sequence and broadening the substrate specificity of the ribozyme. This is Ribonuclease P protein component from Ureaplasma urealyticum serovar 10 (strain ATCC 33699 / Western).